Here is a 495-residue protein sequence, read N- to C-terminus: Bile acid-sensitive ion channel (495 aa).

The binds the plasma membrane and stabilizes the channel in the closed state stretch occupies residues 1-30 (MEHTEKSKGPAEKGLLGKIRRYLSKRPLPS). Topologically, residues 1 to 61 (MEHTEKSKGP…NIAQNQNKVR (61 aa)) are cytoplasmic. A helical transmembrane segment spans residues 62–82 (KVIWLSVVLGSVSLLVWQIYS). The Extracellular segment spans residues 83–459 (RLVNYFMWPT…GLFCGASLIT (377 aa)). Intrachain disulfides connect Cys112–Cys207, Cys185–Cys192, Cys298–Cys377, Cys315–Cys373, Cys328–Cys350, and Cys330–Cys342. N-linked (GlcNAc...) asparagine glycans are attached at residues Asn147 and Asn163. The N-linked (GlcNAc...) asparagine glycan is linked to Asn306. Residues Asn370, Asn405, and Asn421 are each glycosylated (N-linked (GlcNAc...) asparagine). The GAS motif; ion selectivity filter signature appears at 454-456 (GAS). The chain crosses the membrane as a helical span at residues 460–480 (IIEIIEYLFTSFYWVFIFFLL). Residues 481–495 (KILEMIQRTSPPQTV) lie on the Cytoplasmic side of the membrane.

Belongs to the amiloride-sensitive sodium channel (TC 1.A.6) family. ASIC5 subfamily. As to quaternary structure, forms homotrimeric channels. In terms of tissue distribution, expressed by cholangiocytes (at protein level). Detected in brain, liver, duodenum, jejunum, ileum and testis.

It localises to the apical cell membrane. The protein resides in the cell membrane. The enzyme catalyses Na(+)(in) = Na(+)(out). It carries out the reaction Li(+)(in) = Li(+)(out). It catalyses the reaction K(+)(in) = K(+)(out). The catalysed reaction is H(+)(in) = H(+)(out). Inhibited by the diuretic drug amiloride. Inhibited by diminazene. Inhibited by extracellular Ca(2+). Forms bile acid-gated sodium channels and may play a role in bile acid-dependent absorption and secretion by epithelial cells of the bile ducts. Displays high selectivity for sodium ions but can also permit the permeation of other cations. The gating could be indirect and the consequence of alterations of the membrane environment of the channel by bile acids. As a sodium channel of type II unipolar brush cells of the vestibulocerebellum, controlling the electrical activity of these cells, could play a role in motor coordination and balance. The polypeptide is Bile acid-sensitive ion channel (Rattus norvegicus (Rat)).